The chain runs to 339 residues: DNA-directed RNA polymerase subunit alpha (339 aa).

The alpha N-terminal domain (alpha-NTD) stretch occupies residues 1-233 (MVREEVAGST…DLFLPFLHAE (233 aa)). The interval 264–339 (KKGIPLNCIF…IDLLKNKLSF (76 aa)) is alpha C-terminal domain (alpha-CTD).

The protein belongs to the RNA polymerase alpha chain family. In terms of assembly, in plastids the minimal PEP RNA polymerase catalytic core is composed of four subunits: alpha, beta, beta', and beta''. When a (nuclear-encoded) sigma factor is associated with the core the holoenzyme is formed, which can initiate transcription.

The protein resides in the plastid. Its subcellular location is the chloroplast. It carries out the reaction RNA(n) + a ribonucleoside 5'-triphosphate = RNA(n+1) + diphosphate. DNA-dependent RNA polymerase catalyzes the transcription of DNA into RNA using the four ribonucleoside triphosphates as substrates. This Festucopsis serpentini protein is DNA-directed RNA polymerase subunit alpha.